The following is a 450-amino-acid chain: uncharacterized protein (450 aa).

It belongs to the heat shock protein 70 family.

This is an uncharacterized protein from Escherichia coli (strain K12).